The chain runs to 243 residues: DNA repair protein RecO (243 aa).

This sequence belongs to the RecO family.

Functionally, involved in DNA repair and RecF pathway recombination. In Xylella fastidiosa (strain M23), this protein is DNA repair protein RecO.